The chain runs to 53 residues: Small ribosomal subunit protein uS14 (53 aa).

The Zn(2+) site is built by Cys-17, Cys-20, Cys-36, and Cys-39.

Belongs to the universal ribosomal protein uS14 family. Zinc-binding uS14 subfamily. As to quaternary structure, part of the 30S ribosomal subunit. Zn(2+) is required as a cofactor.

In terms of biological role, binds 16S rRNA, required for the assembly of 30S particles. The protein is Small ribosomal subunit protein uS14 of Methanococcus maripaludis (strain DSM 14266 / JCM 13030 / NBRC 101832 / S2 / LL).